The sequence spans 272 residues: Magnetosome protein MamQ (272 aa).

Residues 1 to 46 (MAVSDADASSVDKVESITLQRVKQSEELLAQLYVVEESPRRMGRGP) are Cytoplasmic-facing. Residues 47 to 67 (VQLMLAISVLSLVAFITTLLM) traverse the membrane as a helical segment. Over 68–272 (RYNAFVTMYE…PLTHSQESKN (205 aa)) the chain is Lumenal.

This sequence belongs to the LemA family.

Its subcellular location is the magnetosome membrane. The protein localises to the cell inner membrane. Its function is as follows. Essential for magnetosome formation. Not essential for formation of magnetosome membrane vesicles. One of 7 genes (mamLQBIEMO) able to induce magnetosome membrane biogenesis; coexpression of mamLQRBIEMO in a deletion of the 17 gene mamAB operon restores magnetosome vesicle formation but not magnetite biosynthesis. The sequence is that of Magnetosome protein MamQ from Magnetospirillum gryphiswaldense (strain DSM 6361 / JCM 21280 / NBRC 15271 / MSR-1).